We begin with the raw amino-acid sequence, 143 residues long: Small ribosomal subunit protein uS9A (143 aa).

An N-acetylserine modification is found at S2. K30 participates in a covalent cross-link: Glycyl lysine isopeptide (Lys-Gly) (interchain with G-Cter in ubiquitin). Phosphoserine is present on S34. Glycyl lysine isopeptide (Lys-Gly) (interchain with G-Cter in ubiquitin) cross-links involve residues K47 and K59. Position 61 is a phosphoserine (S61). Phosphothreonine is present on T70. S76 is subject to Phosphoserine. A disordered region spans residues 123–143 (RPEPKKFGGKGARSRFQKSYR). Positions 134–143 (ARSRFQKSYR) are enriched in basic residues.

The protein belongs to the universal ribosomal protein uS9 family. As to quaternary structure, component of the small ribosomal subunit (SSU). Mature yeast ribosomes consist of a small (40S) and a large (60S) subunit. The 40S small subunit contains 1 molecule of ribosomal RNA (18S rRNA) and 33 different proteins (encoded by 57 genes). The large 60S subunit contains 3 rRNA molecules (25S, 5.8S and 5S rRNA) and 46 different proteins (encoded by 81 genes).

It is found in the cytoplasm. In terms of biological role, component of the ribosome, a large ribonucleoprotein complex responsible for the synthesis of proteins in the cell. The small ribosomal subunit (SSU) binds messenger RNAs (mRNAs) and translates the encoded message by selecting cognate aminoacyl-transfer RNA (tRNA) molecules. The large subunit (LSU) contains the ribosomal catalytic site termed the peptidyl transferase center (PTC), which catalyzes the formation of peptide bonds, thereby polymerizing the amino acids delivered by tRNAs into a polypeptide chain. The nascent polypeptides leave the ribosome through a tunnel in the LSU and interact with protein factors that function in enzymatic processing, targeting, and the membrane insertion of nascent chains at the exit of the ribosomal tunnel. This Saccharomyces cerevisiae (strain ATCC 204508 / S288c) (Baker's yeast) protein is Small ribosomal subunit protein uS9A.